A 377-amino-acid polypeptide reads, in one-letter code: Chaperone protein DnaJ (377 aa).

Residues 5-70 (DFYEVLGVER…SKRAAYDQYG (66 aa)) form the J domain. The segment at 136-214 (GTTVTIRVPT…CHGQGRVEEQ (79 aa)) adopts a CR-type zinc-finger fold. Zn(2+) contacts are provided by Cys149, Cys152, Cys166, Cys169, Cys188, Cys191, Cys202, and Cys205. 4 CXXCXGXG motif repeats span residues 149 to 156 (CKTCNGSG), 166 to 173 (CTTCGGIG), 188 to 195 (CPRCHGTG), and 202 to 209 (CGSCHGQG).

This sequence belongs to the DnaJ family. As to quaternary structure, homodimer. It depends on Zn(2+) as a cofactor.

The protein localises to the cytoplasm. In terms of biological role, participates actively in the response to hyperosmotic and heat shock by preventing the aggregation of stress-denatured proteins and by disaggregating proteins, also in an autonomous, DnaK-independent fashion. Unfolded proteins bind initially to DnaJ; upon interaction with the DnaJ-bound protein, DnaK hydrolyzes its bound ATP, resulting in the formation of a stable complex. GrpE releases ADP from DnaK; ATP binding to DnaK triggers the release of the substrate protein, thus completing the reaction cycle. Several rounds of ATP-dependent interactions between DnaJ, DnaK and GrpE are required for fully efficient folding. Also involved, together with DnaK and GrpE, in the DNA replication of plasmids through activation of initiation proteins. The sequence is that of Chaperone protein DnaJ from Pseudomonas aeruginosa (strain LESB58).